The following is a 394-amino-acid chain: Protein NDRG1 (394 aa).

At S2 the chain carries N-acetylserine. 3 positions are modified to phosphoserine: S2, S319, and S326. The interval 325–394 (RSRTASGSSV…AGPKSMEVSC (70 aa)) is disordered. A compositionally biased stretch (polar residues) spans 327–339 (RTASGSSVTSLDG). T328 carries the phosphothreonine; by SGK1 modification. Residues S330 and S332 each carry the phosphoserine; by SGK1 modification. At S333 the chain carries Phosphoserine. T335 carries the phosphothreonine modification. The residue at position 336 (S336) is a Phosphoserine. 3 consecutive repeat copies span residues 339-348 (GTRSRSHTSE), 349-358 (GTRSRSHTSE), and 359-368 (GTRSRSHTSE). The segment at 339 to 368 (GTRSRSHTSEGTRSRSHTSEGTRSRSHTSE) is 3 X 10 AA tandem repeats of G-T-R-S-R-S-H-T-S-E. T340 is subject to Phosphothreonine. S342 bears the Phosphoserine mark. Over residues 345 to 371 (HTSEGTRSRSHTSEGTRSRSHTSEGAH) the composition is skewed to basic and acidic residues. Residue T346 is modified to Phosphothreonine; by SGK1. Phosphoserine is present on S352. The residue at position 356 (T356) is a Phosphothreonine; by SGK1. Residue S362 is modified to Phosphoserine. At S364 the chain carries Phosphoserine; by SGK1. Position 366 is a phosphothreonine; by SGK1 (T366). Phosphothreonine is present on T375.

Belongs to the NDRG family. As to quaternary structure, interacts with RAB4A (membrane-bound form); the interaction involves NDRG1 in vesicular recycling of CDH1. Under stress conditions, phosphorylated in the C-terminal on many serine and threonine residues. Phosphorylated in vitro by PKA. Phosphorylation enhanced by increased intracellular cAMP levels. Homocysteine induces dephosphorylation. Phosphorylation by SGK1 is cell cycle dependent. Ubiquitous; expressed most prominently in placental membranes and prostate, kidney, small intestine, and ovary tissues. Also expressed in heart, brain, skeletal muscle, lung, liver and pancreas. Low levels in peripheral blood leukocytes and in tissues of the immune system. Expressed mainly in epithelial cells. Also found in Schwann cells of peripheral neurons. Reduced expression in adenocarcinomas compared to normal tissues. In colon, prostate and placental membranes, the cells that border the lumen show the highest expression.

The protein localises to the cytoplasm. It localises to the cytosol. It is found in the cytoskeleton. The protein resides in the microtubule organizing center. Its subcellular location is the centrosome. The protein localises to the nucleus. It localises to the cell membrane. Its function is as follows. Stress-responsive protein involved in hormone responses, cell growth, and differentiation. Acts as a tumor suppressor in many cell types. Necessary but not sufficient for p53/TP53-mediated caspase activation and apoptosis. Has a role in cell trafficking, notably of the Schwann cell, and is necessary for the maintenance and development of the peripheral nerve myelin sheath. Required for vesicular recycling of CDH1 and TF. May also function in lipid trafficking. Protects cells from spindle disruption damage. Functions in p53/TP53-dependent mitotic spindle checkpoint. Regulates microtubule dynamics and maintains euploidy. This is Protein NDRG1 (NDRG1) from Homo sapiens (Human).